Consider the following 454-residue polypeptide: Alpha-1,3-mannosyl-glycoprotein 4-beta-N-acetylglucosaminyltransferase C (454 aa).

Topologically, residues 1 to 6 (MRCHLK) are cytoplasmic. The helical; Signal-anchor for type II membrane protein transmembrane segment at 7 to 24 (KWVVVAAGLSILTSLYVY) threads the bilayer. The Lumenal segment spans residues 25 to 454 (MQRAQSGNLK…VWTVKEDKTI (430 aa)). Asn58 and Asn189 each carry an N-linked (GlcNAc...) asparagine glycan.

The protein belongs to the glycosyltransferase 54 family. The cofactor is a divalent metal cation.

The protein resides in the golgi apparatus membrane. It carries out the reaction N(4)-{beta-D-GlcNAc-(1-&gt;2)-alpha-D-Man-(1-&gt;3)-[beta-D-GlcNAc-(1-&gt;2)-alpha-D-Man-(1-&gt;6)]-beta-D-Man-(1-&gt;4)-beta-D-GlcNAc-(1-&gt;4)-beta-D-GlcNAc}-L-asparaginyl-[protein] + UDP-N-acetyl-alpha-D-glucosamine = N(4)-{beta-D-GlcNAc-(1-&gt;2)-[beta-D-GlcNAc-(1-&gt;4)]-alpha-D-Man-(1-&gt;3)-[beta-D-GlcNAc-(1-&gt;2)-alpha-D-Man-(1-&gt;6)]-beta-D-Man-(1-&gt;4)-beta-D-GlcNAc-(1-&gt;4)-beta-D-GlcNAc}-L-asparaginyl-[protein] + UDP + H(+). It participates in protein modification; protein glycosylation. In terms of biological role, glycosyltransferase that participates in the transfer of N-acetylglucosamine (GlcNAc) to the core mannose residues of N-linked glycans. Catalyzes the formation of the GlcNAcbeta1-4 branch on the GlcNAcbeta1-2Manalpha1-3 arm of the core structure of N-linked glycans. The protein is Alpha-1,3-mannosyl-glycoprotein 4-beta-N-acetylglucosaminyltransferase C (mgat4c) of Danio rerio (Zebrafish).